The primary structure comprises 501 residues: CaM kinase-like vesicle-associated protein (501 aa).

Residues 24-286 enclose the Protein kinase domain; it reads YDLGQVIKTE…AEEAISHEWI (263 aa). The interval 327–501 is disordered; it reads RAPEQSSTAA…AQESQREEAS (175 aa). Positions 331–365 are enriched in low complexity; it reads QSSTAAAQSASATDTATPGAAGGATAAAASGATSA. A compositionally biased stretch (polar residues) spans 387-428; that stretch reads TPATDGSATPATDGSVTPATDGSITPATDGSVTPATDRSATP. A Phosphothreonine modification is found at threonine 435. Positions 438–451 are enriched in polar residues; that stretch reads TEESTVPTTQSSAM. Threonine 459 is modified (phosphothreonine).

This sequence belongs to the protein kinase superfamily. CAMK Ser/Thr protein kinase family. Interacts with calmodulin, in the presence of calcium. The cofactor is Ca(2+).

Its subcellular location is the cell membrane. The protein resides in the cytoplasmic vesicle membrane. Its function is as follows. Does not appear to have detectable kinase activity. This is CaM kinase-like vesicle-associated protein (CAMKV) from Homo sapiens (Human).